Reading from the N-terminus, the 194-residue chain is Peptidyl-tRNA hydrolase (194 aa).

Position 17 (tyrosine 17) interacts with tRNA. Histidine 22 (proton acceptor) is an active-site residue. The tRNA site is built by tyrosine 68, asparagine 70, and asparagine 116.

The protein belongs to the PTH family. Monomer.

It localises to the cytoplasm. It carries out the reaction an N-acyl-L-alpha-aminoacyl-tRNA + H2O = an N-acyl-L-amino acid + a tRNA + H(+). Its function is as follows. Hydrolyzes ribosome-free peptidyl-tRNAs (with 1 or more amino acids incorporated), which drop off the ribosome during protein synthesis, or as a result of ribosome stalling. Functionally, catalyzes the release of premature peptidyl moieties from peptidyl-tRNA molecules trapped in stalled 50S ribosomal subunits, and thus maintains levels of free tRNAs and 50S ribosomes. This Pseudomonas entomophila (strain L48) protein is Peptidyl-tRNA hydrolase.